The following is a 737-amino-acid chain: Probable beta-glucosidase L (737 aa).

An N-terminal signal peptide occupies residues 1 to 19; sequence MRSLIRSGALNAFLAASLA. The N-linked (GlcNAc...) asparagine glycan is linked to N225. D253 is an active-site residue. Residues N340, N365, and N608 are each glycosylated (N-linked (GlcNAc...) asparagine).

Belongs to the glycosyl hydrolase 3 family.

Its subcellular location is the secreted. It catalyses the reaction Hydrolysis of terminal, non-reducing beta-D-glucosyl residues with release of beta-D-glucose.. It participates in glycan metabolism; cellulose degradation. Its function is as follows. Beta-glucosidases are one of a number of cellulolytic enzymes involved in the degradation of cellulosic biomass. Catalyzes the last step releasing glucose from the inhibitory cellobiose. This chain is Probable beta-glucosidase L (bglL), found in Emericella nidulans (strain FGSC A4 / ATCC 38163 / CBS 112.46 / NRRL 194 / M139) (Aspergillus nidulans).